The following is a 392-amino-acid chain: 4-hydroxy-3-methylbut-2-en-1-yl diphosphate synthase (flavodoxin) (392 aa).

[4Fe-4S] cluster is bound by residues Cys280, Cys283, Cys315, and Glu322. A compositionally biased stretch (basic and acidic residues) spans 371-380 (TEKGSDHCSE). Residues 371 to 392 (TEKGSDHCSETTRSGSPVVTVN) form a disordered region. Positions 381–392 (TTRSGSPVVTVN) are enriched in polar residues.

It belongs to the IspG family. [4Fe-4S] cluster is required as a cofactor.

The catalysed reaction is (2E)-4-hydroxy-3-methylbut-2-enyl diphosphate + oxidized [flavodoxin] + H2O + 2 H(+) = 2-C-methyl-D-erythritol 2,4-cyclic diphosphate + reduced [flavodoxin]. It functions in the pathway isoprenoid biosynthesis; isopentenyl diphosphate biosynthesis via DXP pathway; isopentenyl diphosphate from 1-deoxy-D-xylulose 5-phosphate: step 5/6. Its function is as follows. Converts 2C-methyl-D-erythritol 2,4-cyclodiphosphate (ME-2,4cPP) into 1-hydroxy-2-methyl-2-(E)-butenyl 4-diphosphate. This is 4-hydroxy-3-methylbut-2-en-1-yl diphosphate synthase (flavodoxin) from Mycobacterium leprae (strain Br4923).